The following is a 137-amino-acid chain: Large ribosomal subunit protein uL16 (137 aa).

This sequence belongs to the universal ribosomal protein uL16 family. In terms of assembly, part of the 50S ribosomal subunit.

Its function is as follows. Binds 23S rRNA and is also seen to make contacts with the A and possibly P site tRNAs. This Acinetobacter baumannii (strain SDF) protein is Large ribosomal subunit protein uL16.